The sequence spans 61 residues: Large ribosomal subunit protein bL32 (61 aa).

It belongs to the bacterial ribosomal protein bL32 family.

This Syntrophus aciditrophicus (strain SB) protein is Large ribosomal subunit protein bL32.